The following is a 506-amino-acid chain: Galactose/methyl galactoside import ATP-binding protein MglA (506 aa).

ABC transporter domains lie at L14 to S249 and V264 to L506. G46–S53 lines the ATP pocket.

It belongs to the ABC transporter superfamily. Galactose/methyl galactoside importer (TC 3.A.1.2.3) family. In terms of assembly, the complex is composed of one ATP-binding protein (MglA), two transmembrane proteins (MglC) and a solute-binding protein (MglB).

It localises to the cell inner membrane. It catalyses the reaction D-galactose(out) + ATP + H2O = D-galactose(in) + ADP + phosphate + H(+). The enzyme catalyses methyl beta-D-galactoside(out) + ATP + H2O = methyl beta-D-galactoside(in) + ADP + phosphate + H(+). Its function is as follows. Part of the ABC transporter complex MglABC involved in galactose/methyl galactoside import. Responsible for energy coupling to the transport system. This chain is Galactose/methyl galactoside import ATP-binding protein MglA, found in Shigella flexneri serotype 5b (strain 8401).